The chain runs to 90 residues: MSQICVKASVKGIVQGVGFRFHTAHEGLQGGLSGYAMNLPDGSVEVLACGSEANVNKLLAWLESGPKTSRVDNIDAEIIEWRHIDGFEIK.

The 86-residue stretch at 5–90 (CVKASVKGIV…WRHIDGFEIK (86 aa)) folds into the Acylphosphatase-like domain. Residues Arg20 and Asn38 contribute to the active site.

The protein belongs to the acylphosphatase family.

The enzyme catalyses an acyl phosphate + H2O = a carboxylate + phosphate + H(+). The protein is Acylphosphatase (acyP) of Photobacterium profundum (strain SS9).